Reading from the N-terminus, the 301-residue chain is ATP synthase gamma chain (301 aa).

It belongs to the ATPase gamma chain family. F-type ATPases have 2 components, CF(1) - the catalytic core - and CF(0) - the membrane proton channel. CF(1) has five subunits: alpha(3), beta(3), gamma(1), delta(1), epsilon(1). CF(0) has three main subunits: a, b and c.

The protein localises to the cell inner membrane. Functionally, produces ATP from ADP in the presence of a proton gradient across the membrane. The gamma chain is believed to be important in regulating ATPase activity and the flow of protons through the CF(0) complex. This is ATP synthase gamma chain from Helicobacter pylori (strain P12).